A 498-amino-acid polypeptide reads, in one-letter code: Pyruvate kinase (498 aa).

Substrate is bound at residue arginine 53. Positions 55, 57, 87, and 88 each coordinate K(+). 55 to 58 (NFSH) contacts ATP. ATP contacts are provided by arginine 94 and lysine 178. Glutamate 240 contacts Mg(2+). The substrate site is built by glycine 263, aspartate 264, and threonine 296. Aspartate 264 is a Mg(2+) binding site.

It belongs to the pyruvate kinase family. In terms of assembly, homotetramer. Requires Mg(2+) as cofactor. It depends on K(+) as a cofactor.

The enzyme catalyses pyruvate + ATP = phosphoenolpyruvate + ADP + H(+). It functions in the pathway carbohydrate degradation; glycolysis; pyruvate from D-glyceraldehyde 3-phosphate: step 5/5. This is Pyruvate kinase (PYK) from Trypanoplasma borreli.